Reading from the N-terminus, the 546-residue chain is Chaperonin GroEL 2 (546 aa).

ATP is bound by residues 30–33 (TLGP), Lys-51, 87–91 (DGTTT), Gly-415, and Asp-495. The segment at 527–546 (DAAPATAPGGPGAGGPGFDF) is disordered. Residues 535–546 (GGPGAGGPGFDF) are compositionally biased toward gly residues.

Belongs to the chaperonin (HSP60) family. In terms of assembly, forms a cylinder of 14 subunits composed of two heptameric rings stacked back-to-back. Interacts with the co-chaperonin GroES.

It localises to the cytoplasm. It carries out the reaction ATP + H2O + a folded polypeptide = ADP + phosphate + an unfolded polypeptide.. Together with its co-chaperonin GroES, plays an essential role in assisting protein folding. The GroEL-GroES system forms a nano-cage that allows encapsulation of the non-native substrate proteins and provides a physical environment optimized to promote and accelerate protein folding. In Burkholderia ambifaria (strain ATCC BAA-244 / DSM 16087 / CCUG 44356 / LMG 19182 / AMMD) (Burkholderia cepacia (strain AMMD)), this protein is Chaperonin GroEL 2.